Here is a 336-residue protein sequence, read N- to C-terminus: Fructose-1,6-bisphosphatase class 1 (336 aa).

Residues Glu-90, Asp-112, Leu-114, and Asp-115 each contribute to the Mg(2+) site. Substrate-binding positions include 115–118 (DGSS), Asn-211, and Lys-277. Glu-283 is a binding site for Mg(2+).

The protein belongs to the FBPase class 1 family. Homotetramer. Requires Mg(2+) as cofactor.

The protein localises to the cytoplasm. The enzyme catalyses beta-D-fructose 1,6-bisphosphate + H2O = beta-D-fructose 6-phosphate + phosphate. Its pathway is carbohydrate biosynthesis; gluconeogenesis. This chain is Fructose-1,6-bisphosphatase class 1, found in Pseudomonas putida (strain W619).